Consider the following 412-residue polypeptide: Peptidase T (412 aa).

Residue histidine 83 coordinates Zn(2+). Residue aspartate 85 is part of the active site. Residue aspartate 145 coordinates Zn(2+). The active-site Proton acceptor is the glutamate 179. Positions 180, 202, and 384 each coordinate Zn(2+).

The protein belongs to the peptidase M20B family. It depends on Zn(2+) as a cofactor.

The protein resides in the cytoplasm. The enzyme catalyses Release of the N-terminal residue from a tripeptide.. Its function is as follows. Cleaves the N-terminal amino acid of tripeptides. The sequence is that of Peptidase T from Fusobacterium nucleatum subsp. nucleatum (strain ATCC 25586 / DSM 15643 / BCRC 10681 / CIP 101130 / JCM 8532 / KCTC 2640 / LMG 13131 / VPI 4355).